The chain runs to 509 residues: MFS transporter fsdG (509 aa).

N-linked (GlcNAc...) asparagine glycans are attached at residues N8 and N26. 4 helical membrane-spanning segments follow: residues 63–83, 103–123, 139–159, and 162–182; these read FLIH…ATTM, IALT…VTSP, IFFL…MFIA, and FLAG…IADF. N189 is a glycosylation site (N-linked (GlcNAc...) asparagine). Transmembrane regions (helical) follow at residues 195 to 215, 222 to 242, 298 to 318, and 341 to 361; these read LFAL…GFVA, WTFR…CIFL, LIFL…FGLI, and GLSY…FNFI. The N-linked (GlcNAc...) asparagine glycan is linked to N367. Helical transmembrane passes span 380-400, 408-428, 442-462, and 474-494; these read YLPL…WYGW, WVVP…IIMP, AASV…FLPL, and GWGN…PAIF.

This sequence belongs to the major facilitator superfamily.

It localises to the cell membrane. Efflux pump that might be required for efficient secretion of fusaridione A or other secondary metabolies produced by the fusaridione A gene cluster. This chain is MFS transporter fsdG, found in Fusarium heterosporum.